A 485-amino-acid chain; its full sequence is Adenosylhomocysteinase (485 aa).

Thr-64, Asp-139, and Glu-205 together coordinate substrate. Residue 206-208 coordinates NAD(+); that stretch reads TTT. Residues Lys-235 and Asp-239 each contribute to the substrate site. NAD(+) is bound by residues Asn-240, 269-274, Glu-292, Asn-327, 348-350, and Asn-397; these read GYGDVG and IGH.

Belongs to the adenosylhomocysteinase family. The cofactor is NAD(+).

The enzyme catalyses S-adenosyl-L-homocysteine + H2O = L-homocysteine + adenosine. It functions in the pathway amino-acid biosynthesis; L-homocysteine biosynthesis; L-homocysteine from S-adenosyl-L-homocysteine: step 1/1. Adenosylhomocysteine is a competitive inhibitor of S-adenosyl-L-methionine-dependent methyl transferase reactions; therefore adenosylhomocysteinase may play a key role in the control of methylations via regulation of the intracellular concentration of adenosylhomocysteine. The chain is Adenosylhomocysteinase (SAHH) from Solanum lycopersicum (Tomato).